We begin with the raw amino-acid sequence, 1243 residues long: Zinc finger protein ZFAT (1243 aa).

The segment at 12-35 adopts a C2H2-type 1 zinc-finger fold; it reads FMCKCCNLFSPNQSELLSHVSEKH. Disordered stretches follow at residues 51–116 and 147–189; these read PLST…PSSL and GEAG…GKEA. Over residues 70-81 the composition is skewed to basic residues; sequence MKRKRGRPKGST. A C2H2-type 2; degenerate zinc finger spans residues 116–141; sequence LECSKCCRKFSNTRQLRKHICIIVLN. The span at 156-189 shows a compositional bias: basic and acidic residues; it reads ELEKKCKEDDREKASKRPRSQKTEKVQKISGKEA. 7 consecutive C2H2-type zinc fingers follow at residues 271-293, 299-321, 326-349, 354-377, 404-426, 432-454, and 458-481; these read FTCE…LRIH, YKCP…LRKH, FACD…ERVH, QHCR…RDAH, YDCH…MLVH, FACE…VRKH, and YVCA…KEVH. 20 residues coordinate Zn(2+): Cys-273, Cys-276, His-289, His-293, Cys-301, Cys-304, His-317, His-321, Cys-328, Cys-331, His-344, His-349, Cys-356, Cys-359, His-372, His-377, Cys-406, Cys-409, His-422, and His-426. Zn(2+) is bound by residues Cys-460, Cys-463, His-476, and His-481. Disordered regions lie at residues 534 to 570, 603 to 625, and 638 to 705; these read EACP…AEST, TSSA…SSVQ, and AQSA…CKAA. Residues 610 to 620 show a composition bias toward basic and acidic residues; that stretch reads AAPEKPPDMQH. Positions 638-650 are enriched in polar residues; the sequence is AQSAGSDQESHGA. C2H2-type zinc fingers lie at residues 742 to 764, 770 to 793, 798 to 822, 830 to 853, 880 to 903, 909 to 931, 937 to 959, 966 to 988, 994 to 1017, and 1041 to 1064; these read LECE…VRTH, YYCS…IQKH, LKCP…LKVH, YSCP…KTNH, MKCP…IWAH, FKCS…MNRH, HLCD…KLLH, FKCT…MEQH, FRCA…NRKH, and LKCP…KNKH. Positions 772, 775, 788, 793, 800, 805, 818, 822, 832, 835, 848, 853, 882, 885, 899, 903, 911, 914, 927, 931, 939, 942, 955, and 958 each coordinate Zn(2+).

As to expression, isoform 1 is strongly expressed in placenta, spleen, kidney, testis and peripheral blood leukocytes. Expressed in CD4+ and CD8+ T-cells, CD19+ B-cells and CB14+ monocytes. Isoform 3 is strongly expressed in placenta, ovary, tonsil, CD19+ B-cells and CD14+ monocytes.

The protein resides in the nucleus. It is found in the cytoplasm. The protein localises to the cytosol. May be involved in transcriptional regulation. Overexpression causes down-regulation of a number of genes involved in the immune response. Some genes are also up-regulated. The protein is Zinc finger protein ZFAT (ZFAT) of Homo sapiens (Human).